The sequence spans 429 residues: 3-phosphoshikimate 1-carboxyvinyltransferase (429 aa).

3-phosphoshikimate contacts are provided by Lys-23, Ser-24, and Arg-28. Residue Lys-23 participates in phosphoenolpyruvate binding. Phosphoenolpyruvate contacts are provided by Gly-95 and Arg-123. 3-phosphoshikimate contacts are provided by Ser-168, Gln-170, Asp-316, and Lys-343. Gln-170 contributes to the phosphoenolpyruvate binding site. Asp-316 functions as the Proton acceptor in the catalytic mechanism. Residues Arg-347 and Arg-389 each coordinate phosphoenolpyruvate.

It belongs to the EPSP synthase family. Monomer.

Its subcellular location is the cytoplasm. The enzyme catalyses 3-phosphoshikimate + phosphoenolpyruvate = 5-O-(1-carboxyvinyl)-3-phosphoshikimate + phosphate. The protein operates within metabolic intermediate biosynthesis; chorismate biosynthesis; chorismate from D-erythrose 4-phosphate and phosphoenolpyruvate: step 6/7. Its function is as follows. Catalyzes the transfer of the enolpyruvyl moiety of phosphoenolpyruvate (PEP) to the 5-hydroxyl of shikimate-3-phosphate (S3P) to produce enolpyruvyl shikimate-3-phosphate and inorganic phosphate. The protein is 3-phosphoshikimate 1-carboxyvinyltransferase of Bacillus thuringiensis subsp. konkukian (strain 97-27).